Here is a 377-residue protein sequence, read N- to C-terminus: Alanine racemase (377 aa).

The active-site Proton acceptor; specific for D-alanine is Lys37. Lys37 is subject to N6-(pyridoxal phosphate)lysine. Substrate is bound at residue Arg135. Residue Tyr271 is the Proton acceptor; specific for L-alanine of the active site. Met319 lines the substrate pocket.

It belongs to the alanine racemase family. It depends on pyridoxal 5'-phosphate as a cofactor.

The enzyme catalyses L-alanine = D-alanine. It participates in amino-acid biosynthesis; D-alanine biosynthesis; D-alanine from L-alanine: step 1/1. Functionally, catalyzes the interconversion of L-alanine and D-alanine. May also act on other amino acids. This is Alanine racemase (alr) from Helicobacter pylori (strain G27).